The sequence spans 190 residues: Transcription factor E (190 aa).

In terms of domain architecture, HTH TFE/IIEalpha-type spans 4–87 (KNKALLEIAK…YWHLETKRLP (84 aa)). A disordered region spans residues 170 to 190 (PSPKKEKKKTRAKAKRKTRKK). Over residues 174–190 (KEKKKTRAKAKRKTRKK) the composition is skewed to basic residues.

It belongs to the TFE family. Monomer. Interaction with RNA polymerase subunits RpoF and RpoE is necessary for Tfe stimulatory transcription activity. Able to interact with Tbp and RNA polymerase in the absence of DNA promoter. Interacts both with the preinitiation and elongation complexes.

Functionally, transcription factor that plays a role in the activation of archaeal genes transcribed by RNA polymerase. Facilitates transcription initiation by enhancing TATA-box recognition by TATA-box-binding protein (Tbp), and transcription factor B (Tfb) and RNA polymerase recruitment. Not absolutely required for transcription in vitro, but particularly important in cases where Tbp or Tfb function is not optimal. It dynamically alters the nucleic acid-binding properties of RNA polymerases by stabilizing the initiation complex and destabilizing elongation complexes. Seems to translocate with the RNA polymerase following initiation and acts by binding to the non template strand of the transcription bubble in elongation complexes. This Pyrococcus abyssi (strain GE5 / Orsay) protein is Transcription factor E.